We begin with the raw amino-acid sequence, 465 residues long: Ribulose bisphosphate carboxylase large chain (465 aa).

Position 4 is an N6,N6,N6-trimethyllysine (lysine 4). The substrate site is built by asparagine 113 and threonine 163. Lysine 165 functions as the Proton acceptor in the catalytic mechanism. Lysine 167 is a substrate binding site. Mg(2+)-binding residues include lysine 191, aspartate 193, and glutamate 194. Residue lysine 191 is modified to N6-carboxylysine. Histidine 284 functions as the Proton acceptor in the catalytic mechanism. Residues arginine 285, histidine 317, and serine 369 each coordinate substrate.

Belongs to the RuBisCO large chain family. Type I subfamily. Heterohexadecamer of 8 large chains and 8 small chains; disulfide-linked. The disulfide link is formed within the large subunit homodimers. Requires Mg(2+) as cofactor. Post-translationally, the disulfide bond which can form in the large chain dimeric partners within the hexadecamer appears to be associated with oxidative stress and protein turnover.

The protein localises to the plastid. Its subcellular location is the chloroplast. The catalysed reaction is 2 (2R)-3-phosphoglycerate + 2 H(+) = D-ribulose 1,5-bisphosphate + CO2 + H2O. It carries out the reaction D-ribulose 1,5-bisphosphate + O2 = 2-phosphoglycolate + (2R)-3-phosphoglycerate + 2 H(+). Its function is as follows. RuBisCO catalyzes two reactions: the carboxylation of D-ribulose 1,5-bisphosphate, the primary event in carbon dioxide fixation, as well as the oxidative fragmentation of the pentose substrate in the photorespiration process. Both reactions occur simultaneously and in competition at the same active site. This chain is Ribulose bisphosphate carboxylase large chain, found in Securidaca diversifolia (Easter flower).